The chain runs to 231 residues: MAKLTKRQKAIAEKIEAGKSYNFVDAAALLTELSTVKFSESIDVAVNLGVDPRKSDQVVRSATVLPHGTGKTVRVAVFTQGPAAEAALAAGADRVGMDDLAAEMKAGDLNYDVVIASPDAMRVVGQLGQVLGPRGLMPNPKVGTVTPDVANAVKNAKAGQVRYRTDKNGIIHTSVGKVGFDAVKLKENVEALIADLKRIKPASSKGIYVKRITLSTTMGPGLVIDQGSLEA.

Belongs to the universal ribosomal protein uL1 family. In terms of assembly, part of the 50S ribosomal subunit.

In terms of biological role, binds directly to 23S rRNA. The L1 stalk is quite mobile in the ribosome, and is involved in E site tRNA release. Its function is as follows. Protein L1 is also a translational repressor protein, it controls the translation of the L11 operon by binding to its mRNA. This is Large ribosomal subunit protein uL1 from Pseudomonas syringae pv. syringae (strain B728a).